The following is a 472-amino-acid chain: Ras-GEF domain-containing family member 1B (472 aa).

The N-terminal Ras-GEF domain occupies 34 to 164 (QDNNLLSGSL…IIQNLIRKLA (131 aa)). Residues 204-452 (DPYTVAQQLT…YLASYESEGP (249 aa)) enclose the Ras-GEF domain.

Guanine nucleotide exchange factor (GEF) with specificity for rap2a and other Ras family proteins (in vitro). This Xenopus tropicalis (Western clawed frog) protein is Ras-GEF domain-containing family member 1B (rasgef1b).